We begin with the raw amino-acid sequence, 293 residues long: Ribosomal protein L11 methyltransferase (293 aa).

Residues Thr145, Gly166, Asp188, and Asn230 each coordinate S-adenosyl-L-methionine.

Belongs to the methyltransferase superfamily. PrmA family.

Its subcellular location is the cytoplasm. It carries out the reaction L-lysyl-[protein] + 3 S-adenosyl-L-methionine = N(6),N(6),N(6)-trimethyl-L-lysyl-[protein] + 3 S-adenosyl-L-homocysteine + 3 H(+). Its function is as follows. Methylates ribosomal protein L11. This chain is Ribosomal protein L11 methyltransferase, found in Actinobacillus succinogenes (strain ATCC 55618 / DSM 22257 / CCUG 43843 / 130Z).